A 485-amino-acid chain; its full sequence is Subtilisin-like protease 1 (485 aa).

Positions 1–19 are cleaved as a signal peptide; sequence MGIFRFISISLAAVSAANA. Residues 20–116 constitute a propeptide that is removed on maturation; that stretch reads GHILSMGHAK…VEPDTTITIH (97 aa). Positions 34–116 constitute an Inhibitor I9 domain; sequence SYIVVMKDGT…VEPDTTITIH (83 aa). The region spanning 126–400 is the Peptidase S8 domain; the sequence is SWGLARISSQ…NILINNGDAK (275 aa). Residues D158 and H190 each act as charge relay system in the active site. N-linked (GlcNAc...) asparagine glycosylation occurs at N251. S345 (charge relay system) is an active-site residue. Residues 377–394 are compositionally biased toward polar residues; that stretch reads GTSSVTNPGPGTRTNILI. A disordered region spans residues 377–462; the sequence is GTSSVTNPGP…HTPFPNDDFN (86 aa). Residues 409–418 are compositionally biased toward pro residues; that stretch reads PSQPPKPSQP. A compositionally biased stretch (low complexity) spans 419-428; that stretch reads SKPQQPSEPQ. The span at 433–455 shows a compositional bias: pro residues; that stretch reads PQEPAPGQPAPAPAPVPQHPHTP.

The protein belongs to the peptidase S8 family.

The protein localises to the secreted. In terms of biological role, secreted subtilisin-like serine protease with keratinolytic activity that contributes to pathogenicity. The polypeptide is Subtilisin-like protease 1 (SUB1) (Arthroderma otae (Microsporum canis)).